A 241-amino-acid polypeptide reads, in one-letter code: ATP synthase subunit a (241 aa).

Helical transmembrane passes span 27 to 47, 52 to 72, 87 to 107, 112 to 132, 142 to 162, 175 to 195, and 198 to 218; these read NCSL…CWAL, VVPG…ANTL, VMTT…PFGF, HLSV…VIGF, IFLP…IKLF, LAAN…FVLK, and LVLA…EIFV.

It belongs to the ATPase A chain family. In terms of assembly, F-type ATPases have 2 components, CF(1) - the catalytic core - and CF(0) - the membrane proton channel. CF(1) has five subunits: alpha(3), beta(3), gamma(1), delta(1), epsilon(1). CF(0) has three main subunits: a(1), b(2) and c(9-12). The alpha and beta chains form an alternating ring which encloses part of the gamma chain. CF(1) is attached to CF(0) by a central stalk formed by the gamma and epsilon chains, while a peripheral stalk is formed by the delta and b chains.

Its subcellular location is the cell inner membrane. Key component of the proton channel; it plays a direct role in the translocation of protons across the membrane. This chain is ATP synthase subunit a, found in Anaplasma marginale (strain St. Maries).